Consider the following 715-residue polypeptide: MTTELEIQKAGKETGIQIWRIEDFELVPVPKTNHGKFYTGDSYIILKTTALESGRGFEWNLHYWQGKESSQDERGAVAILAVKMDDHLNGGPVEHREVQGNESAAFKGLFPTITYLIGGVASGFTHVEINEVEDRKVLTRVKGKRPVRATQVPIKWTSLTDSDSYVFDIGKEIYVWSGPKASHFEKNKAIQYADGLKNERQGRAELHHIDSLDDKESRTMLKDFFGEAFPGSIPSGESDTVQQVGTTIKLFRISDDSGTLKITLVSENSPFNQGDLSSGDTFVLANARTNHIFVWKGKDSSRTERASAANPDNSFFNKIEMPLTSKLTVLPEGGETANFKSLFTNWKSSRDQRGLGQVHSINKTAKVAKETFDASVLHSNPKKAAESKMIDDGSGKTQIWRVASLRKEPVPKELYGQFYGGDCYIIMYTPQRGANVLYYWQGNKASINERTALPIQTKNTHETECDGNASQIRVVQGTEPPHMMMLFGGKPLIVHLGDTISPTGKSKAASTRLYQVQSFFAGRCRAVEVPAKSSHLNSNDAFLLITPSGSYIWVGKGAVESEIQGAKDTAGILKISKYEIINENQEPNEFWTALGGQSDYWRDEREEGVPVEPRLFEMSNATGNFIAEEINSNYVQSDLNPDSIMMLDAWNYIYVWIGKEANQEEKMSFKSLVDNYVKTDGSGRSKDIPREVFDQGKEPLSFTGHFLGWDKTLWD.

The interval 1–124 (MTTELEIQKA…YLIGGVASGF (124 aa)) is actin-severing. One copy of the Gelsolin-like 1 repeat lies at 24-75 (FELVPVPKTNHGKFYTGDSYIILKTTALESGRGFEWNLHYWQGKESSQDERG). Residues 72 to 75 (DERG) are actin-actin interfilament contact point. 136 to 145 (KVLTRVKGKR) contributes to the a 1,2-diacyl-sn-glycero-3-phospho-(1D-myo-inositol-4,5-bisphosphate) binding site. 3 Gelsolin-like repeats span residues 147–187 (VRAT…FEKN), 260–306 (LKIT…TERA), and 405–451 (LRKE…NERT). The segment at 384–715 (AAESKMIDDG…FLGWDKTLWD (332 aa)) is actin-binding, Ca-sensitive. 9 residues coordinate Ca(2+): G421, D422, E449, T499, N539, D540, E562, D642, and E665. Gelsolin-like repeat units lie at residues 524–564 (CRAV…SEIQ) and 625–667 (FIAE…EEKM).

Belongs to the villin/gelsolin family. Predominantly in the body wall muscle, but expression is not restricted to muscle cells.

The protein localises to the cytoplasm. It is found in the cytoskeleton. Functionally, calcium-regulated, actin-modulating protein that binds to the plus (or barbed) ends of actin monomers or filaments, preventing monomer exchange (end-blocking or capping). It can promote the assembly of monomers into filaments (nucleation) as well as sever filaments already formed. The sequence is that of Gelsolin, cytoplasmic from Halocynthia roretzi (Sea squirt).